A 562-amino-acid polypeptide reads, in one-letter code: Nucleoprotein (562 aa).

Residues 53-238 form a binding site for the cap structure m7GTP region; that stretch reads MRRDKRDESD…ITQEESQINI (186 aa). Residues D381 and E383 each contribute to the Mn(2+) site. Residues E391, C498, H501, and C522 each contribute to the Zn(2+) site. Position 526 (D526) interacts with Mn(2+).

Belongs to the arenaviridae nucleocapsid protein family. Homomultimerizes to form the nucleocapsid. Binds to viral genomic RNA. Interacts with glycoprotein G2. Interacts with protein Z; this interaction probably directs the encapsidated genome to budding sites. Interacts with protein L; this interaction does not interfere with Z-L interaction. Interacts with host IKBKE (via Protein kinase domain); the interaction inhibits IKBKE kinase activity.

It localises to the virion. The protein resides in the host cytoplasm. Its function is as follows. Encapsidates the genome, protecting it from nucleases. The encapsidated genomic RNA is termed the nucleocapsid (NC). Serves as template for viral transcription and replication. The increased presence of protein N in host cell does not seem to trigger the switch from transcription to replication as observed in other negative strain RNA viruses. Through the interaction with host IKBKE, strongly inhibits the phosphorylation and nuclear translocation of host IRF3, a protein involved in interferon activation pathway, leading to the inhibition of interferon-beta and IRF3-dependent promoters activation. Also encodes a functional 3'-5' exoribonuclease that degrades preferentially dsRNA substrates and thereby participates in the suppression of interferon induction. In Bear Canyon mammarenavirus (isolate Mouse/United States/AV A0070039/2000) (BCNV), this protein is Nucleoprotein.